An 876-amino-acid chain; its full sequence is Leucine--tRNA ligase (876 aa).

A 'HIGH' region motif is present at residues 43–53 (PYPSGRIHMGH). Positions 632-636 (KMSKS) match the 'KMSKS' region motif. An ATP-binding site is contributed by lysine 635.

Belongs to the class-I aminoacyl-tRNA synthetase family.

Its subcellular location is the cytoplasm. It carries out the reaction tRNA(Leu) + L-leucine + ATP = L-leucyl-tRNA(Leu) + AMP + diphosphate. This is Leucine--tRNA ligase from Sinorhizobium fredii (strain NBRC 101917 / NGR234).